A 213-amino-acid chain; its full sequence is 3-demethoxyubiquinol 3-hydroxylase (213 aa).

Glu-62, Glu-92, His-95, Glu-144, Glu-176, and His-179 together coordinate Fe cation.

Belongs to the COQ7 family. It depends on Fe cation as a cofactor.

It is found in the cell membrane. It catalyses the reaction a 5-methoxy-2-methyl-3-(all-trans-polyprenyl)benzene-1,4-diol + AH2 + O2 = a 3-demethylubiquinol + A + H2O. It functions in the pathway cofactor biosynthesis; ubiquinone biosynthesis. In terms of biological role, catalyzes the hydroxylation of 2-nonaprenyl-3-methyl-6-methoxy-1,4-benzoquinol during ubiquinone biosynthesis. This chain is 3-demethoxyubiquinol 3-hydroxylase, found in Chromohalobacter salexigens (strain ATCC BAA-138 / DSM 3043 / CIP 106854 / NCIMB 13768 / 1H11).